The following is a 175-amino-acid chain: Transcriptional regulator GadE (175 aa).

The HTH luxR-type domain occupies 109–174; sequence HKNSQLCFSH…DIVTLGITSY (66 aa). The H-T-H motif DNA-binding region spans 133 to 152; that stretch reads ESNITSTLNISQQTLKIQKF.

Functionally, regulates the expression of several genes involved in acid resistance. Required for the expression of gadA and gadBC, among others, regardless of media or growth conditions. Binds directly to the 20 bp GAD box found in the control regions of both loci. Could be involved in the regulation of the genes coding for the type III secretion system in enterohaemorragic strains. In Escherichia coli O157:H7, this protein is Transcriptional regulator GadE (gadE).